The following is an 842-amino-acid chain: Protein P (842 aa).

The segment at 1–177 is terminal protein domain (TP); sequence MPLSYQHFRR…FCGSPYTWEQ (177 aa). A spacer region spans residues 178-345; it reads DLQHGAFLDG…YCLSHLVNLL (168 aa). Residues 184–238 are disordered; sequence FLDGPSRVGKEPFRQQSSRIPSRSPVGPSIQSKYQQSRLGLQSQKGPLARGQQGR. Over residues 197-208 the composition is skewed to low complexity; it reads RQQSSRIPSRSP. A compositionally biased stretch (polar residues) spans 212–228; that stretch reads SIQSKYQQSRLGLQSQK. Positions 346-689 are polymerase/reverse transcriptase domain (RT); sequence QDWGPCTEHG…YMNLYPVARQ (344 aa). The Reverse transcriptase domain occupies 356–599; that stretch reads EHHIRIPRTP…YSLNFMGYVI (244 aa). Asp428, Asp550, and Asp551 together coordinate Mg(2+).

The protein belongs to the hepadnaviridae P protein family.

The catalysed reaction is DNA(n) + a 2'-deoxyribonucleoside 5'-triphosphate = DNA(n+1) + diphosphate. It carries out the reaction Endonucleolytic cleavage to 5'-phosphomonoester.. With respect to regulation, activated by host HSP70 and HSP40 in vitro to be able to bind the epsilon loop of the pgRNA. Because deletion of the RNase H region renders the protein partly chaperone-independent, the chaperones may be needed indirectly to relieve occlusion of the RNA-binding site by this domain. Inhibited by several reverse-transcriptase inhibitors: Lamivudine, Adefovir and Entecavir. Its function is as follows. Multifunctional enzyme that converts the viral RNA genome into dsDNA in viral cytoplasmic capsids. This enzyme displays a DNA polymerase activity that can copy either DNA or RNA templates, and a ribonuclease H (RNase H) activity that cleaves the RNA strand of RNA-DNA heteroduplexes in a partially processive 3'- to 5'-endonucleasic mode. Neo-synthesized pregenomic RNA (pgRNA) are encapsidated together with the P protein, and reverse-transcribed inside the nucleocapsid. Initiation of reverse-transcription occurs first by binding the epsilon loop on the pgRNA genome, and is initiated by protein priming, thereby the 5'-end of (-)DNA is covalently linked to P protein. Partial (+)DNA is synthesized from the (-)DNA template and generates the relaxed circular DNA (RC-DNA) genome. After budding and infection, the RC-DNA migrates in the nucleus, and is converted into a plasmid-like covalently closed circular DNA (cccDNA). The activity of P protein does not seem to be necessary for cccDNA generation, and is presumably released from (+)DNA by host nuclear DNA repair machinery. This chain is Protein P, found in Hepatitis B virus genotype G (isolate IG29227/2000) (HBV-G).